Reading from the N-terminus, the 258-residue chain is Probable F-box protein At2g29610 (258 aa).

Residues 1-25 (MVELSEIPGDPNGADPNNNPQEEDE) are disordered. Over residues 8 to 20 (PGDPNGADPNNNP) the composition is skewed to low complexity. An F-box domain is found at 28-74 (LPILLQLPEELIERIIAHFPQCYSPSPILVCETFRQVINSDHFYYVT).

In Arabidopsis thaliana (Mouse-ear cress), this protein is Probable F-box protein At2g29610.